Reading from the N-terminus, the 154-residue chain is Transcriptional repressor NrdR (154 aa).

Residues cysteine 3 to cysteine 34 fold into a zinc finger. Residues valine 46 to aspartate 136 enclose the ATP-cone domain.

This sequence belongs to the NrdR family. Zn(2+) serves as cofactor.

In terms of biological role, negatively regulates transcription of bacterial ribonucleotide reductase nrd genes and operons by binding to NrdR-boxes. This chain is Transcriptional repressor NrdR, found in Mycobacterium leprae (strain Br4923).